The chain runs to 267 residues: Phosphate import ATP-binding protein PstB (267 aa).

The ABC transporter domain occupies 21–262; the sequence is VAARNLDFYY…PSKQQTEDYI (242 aa). 53–60 is a binding site for ATP; that stretch reads GPSGCGKS.

This sequence belongs to the ABC transporter superfamily. Phosphate importer (TC 3.A.1.7) family. As to quaternary structure, the complex is composed of two ATP-binding proteins (PstB), two transmembrane proteins (PstC and PstA) and a solute-binding protein (PstS).

The protein resides in the cell inner membrane. It carries out the reaction phosphate(out) + ATP + H2O = ADP + 2 phosphate(in) + H(+). In terms of biological role, part of the ABC transporter complex PstSACB involved in phosphate import. Responsible for energy coupling to the transport system. The polypeptide is Phosphate import ATP-binding protein PstB (Xanthomonas euvesicatoria pv. vesicatoria (strain 85-10) (Xanthomonas campestris pv. vesicatoria)).